We begin with the raw amino-acid sequence, 208 residues long: NAD(P)H-quinone oxidoreductase subunit I (208 aa).

2 consecutive 4Fe-4S ferredoxin-type domains span residues 55-84 (GRIHYEFDKCIACEVCVRVCPINLPVVDWV) and 95-124 (RNYSIDFGVCIFCGNCVEYCPTNCLSMTEE). Residues cysteine 64, cysteine 67, cysteine 70, cysteine 74, cysteine 104, cysteine 107, cysteine 110, and cysteine 114 each contribute to the [4Fe-4S] cluster site.

Belongs to the complex I 23 kDa subunit family. As to quaternary structure, NDH-1 is composed of at least 11 different subunits. [4Fe-4S] cluster serves as cofactor.

The protein localises to the cellular thylakoid membrane. The enzyme catalyses a plastoquinone + NADH + (n+1) H(+)(in) = a plastoquinol + NAD(+) + n H(+)(out). The catalysed reaction is a plastoquinone + NADPH + (n+1) H(+)(in) = a plastoquinol + NADP(+) + n H(+)(out). Its function is as follows. NDH-1 shuttles electrons from an unknown electron donor, via FMN and iron-sulfur (Fe-S) centers, to quinones in the respiratory and/or the photosynthetic chain. The immediate electron acceptor for the enzyme in this species is believed to be plastoquinone. Couples the redox reaction to proton translocation, and thus conserves the redox energy in a proton gradient. This Prochlorococcus marinus (strain MIT 9301) protein is NAD(P)H-quinone oxidoreductase subunit I.